Reading from the N-terminus, the 354-residue chain is Serine/threonine-protein kinase-transforming protein mos (354 aa).

Residues 74 to 350 (VCLMHRLGSG…LLQRDLKAFR (277 aa)) form the Protein kinase domain. ATP is bound by residues 80-88 (LGSGGFGSV) and lysine 101. The Proton acceptor role is filled by aspartate 209.

Belongs to the protein kinase superfamily. Ser/Thr protein kinase family.

It carries out the reaction L-seryl-[protein] + ATP = O-phospho-L-seryl-[protein] + ADP + H(+). The catalysed reaction is L-threonyl-[protein] + ATP = O-phospho-L-threonyl-[protein] + ADP + H(+). The protein is Serine/threonine-protein kinase-transforming protein mos (V-MOS) of Moloney murine sarcoma virus (strain ts110) (MoMSV).